The primary structure comprises 379 residues: MASRNIWCVRRNFLFDLRGWMLQYSAEVFLKSISFRTFSVECDSKDKESLEEEREDLLSNLVTMGVDIDMARRRQPGVFNKAVTNEQELKIFLLSKGASDKVIGSIISRYPRAITRTPESLSKRWDLWRKIMASDLEIVNILERSPESFFRSNNNLNLENNIKFLCSVGLTHKCLCRLLTNAPRTFSNSLNLNKQMVEFLQETGMSLGHNDPRDFVRKIISKNPSILIQSTKRVKTNIEFLQSTFNLNKQDLLLLICGPGARILDLSNDCTKKNYTNIRERLLSLGCSEEEVQRFVLSYLNMVFLSEKKFNDKIDCLIEEKISASQIIENPRILDSSINTLKTRIRELSHAGYDLSTSSIALLSWSQRRYEAKLKRLCG.

Residues 1 to 37 constitute a mitochondrion transit peptide; sequence MASRNIWCVRRNFLFDLRGWMLQYSAEVFLKSISFRT. Interaction with DNA stretches follow at residues 151–152, 229–233, 306–313, 337–340, and 366–373; these read RS, QSTKR, SEKKFNDK, SINT, and SQRRYEAK.

This sequence belongs to the mTERF family. As to quaternary structure, monomer. Post-translationally, phosphoprotein with mostly four phosphate groups. While the DNA-binding activity is unaffected by the phosphorylation state, only the phosphorylated form of the protein is active for termination activity. Functioning seems to be regulated by phosphorylation. Expressed strongly in the heart and at lower levels in brain, liver and kidney.

The protein resides in the mitochondrion. Functionally, transcription termination factor. Binds to a 28 bp region within the tRNA(Leu(uur)) gene at a position immediately adjacent to and downstream of the 16S rRNA gene; this region comprises a tridecamer sequence critical for directing accurate termination. Binds DNA along the major grove and promotes DNA bending and partial unwinding. Promotes base flipping. Transcription termination activity appears to be polarized with highest specificity for transcripts initiated on the light strand. The polypeptide is Transcription termination factor 1b, mitochondrial (Mus musculus (Mouse)).